Here is a 646-residue protein sequence, read N- to C-terminus: Microtubule-associated protein 9 (646 aa).

Serine 2 carries the N-acetylserine modification. Residue tyrosine 12 is modified to Phosphotyrosine. 6 disordered regions span residues 75–226 (DFHI…QTEE), 242–418 (SLTS…LEPD), 491–511 (RLEE…KGEA), 531–554 (RREK…KKKD), 570–597 (LKQK…KDKQ), and 609–646 (KERQ…SKVF). 2 stretches are compositionally biased toward polar residues: residues 105-119 (ALDS…SSPD) and 157-167 (RSTSSGETSSG). Over residues 188 to 204 (SHTEEGVRPGVDKEHSI) the composition is skewed to basic and acidic residues. Composition is skewed to polar residues over residues 205–222 (SEAS…GTEL), 280–291 (LLSNENEGSSVL), and 330–340 (PLLSTSPSVIT). The span at 346–357 (EPAKKANEDRNT) shows a compositional bias: basic and acidic residues. Residues 386 to 398 (TKRSPSAATSSHY) show a composition bias toward polar residues. Residues 405 to 418 (LDQKQPRKQSLEPD) are compositionally biased toward basic and acidic residues. Positions 442 to 596 (MHRIKRIESE…KRAEKKDKDK (155 aa)) form a coiled coil. Residues 637–646 (PSRTAPSKVF) show a composition bias toward polar residues.

In terms of assembly, binds to purified microtubules via its C-terminus.

Its subcellular location is the cytoplasm. It is found in the cytoskeleton. The protein localises to the spindle. Involved in organization of the bipolar mitotic spindle. Required for bipolar spindle assembly, mitosis progression and cytokinesis. May act by stabilizing interphase microtubules. In Mus musculus (Mouse), this protein is Microtubule-associated protein 9 (Map9).